Reading from the N-terminus, the 370-residue chain is Chaperone protein DnaJ (370 aa).

A J domain is found at 7-73; sequence DYYEILGVPR…QKRAMYDRFG (67 aa). The CR-type zinc-finger motif lies at 144 to 226; the sequence is GTEIPIEYER…CGGSGRVLRR (83 aa). Residues Cys-157, Cys-160, Cys-174, Cys-177, Cys-200, Cys-203, Cys-214, and Cys-217 each coordinate Zn(2+). CXXCXGXG motif repeat units lie at residues 157–164, 174–181, 200–207, and 214–221; these read CPRCGGTG, CDECGGTG, and CHECGGSG.

The protein belongs to the DnaJ family. Homodimer. The cofactor is Zn(2+).

It is found in the cytoplasm. Its function is as follows. Participates actively in the response to hyperosmotic and heat shock by preventing the aggregation of stress-denatured proteins and by disaggregating proteins, also in an autonomous, DnaK-independent fashion. Unfolded proteins bind initially to DnaJ; upon interaction with the DnaJ-bound protein, DnaK hydrolyzes its bound ATP, resulting in the formation of a stable complex. GrpE releases ADP from DnaK; ATP binding to DnaK triggers the release of the substrate protein, thus completing the reaction cycle. Several rounds of ATP-dependent interactions between DnaJ, DnaK and GrpE are required for fully efficient folding. Also involved, together with DnaK and GrpE, in the DNA replication of plasmids through activation of initiation proteins. This chain is Chaperone protein DnaJ, found in Thermotoga neapolitana (strain ATCC 49049 / DSM 4359 / NBRC 107923 / NS-E).